A 1030-amino-acid polypeptide reads, in one-letter code: uncharacterized protein (1030 aa).

Polar residues predominate over residues 1 to 15 (MSENSTDSKNFQFSE). The interval 1–53 (MSENSTDSKNFQFSEGSRESSNDELKVLLRDTETKEDEKSSFSNSEEESIIEN) is disordered. Over residues 16–40 (GSRESSNDELKVLLRDTETKEDEKS) the composition is skewed to basic and acidic residues. Serine 41 carries the post-translational modification Phosphoserine. Positions 134–290 (IKCVERMESV…WISEIHKQPC (157 aa)) constitute a Helicase ATP-binding domain. 147-154 (AHTSAGKT) provides a ligand contact to ATP. Residues 238 to 241 (DEVH) carry the DEVH box motif. One can recognise a Helicase C-terminal domain in the interval 357 to 561 (SLERIINMVL…GMILNLMRIE (205 aa)).

It belongs to the helicase family. SKI2 subfamily.

It is found in the nucleus. This is an uncharacterized protein from Schizosaccharomyces pombe (strain 972 / ATCC 24843) (Fission yeast).